The following is a 467-amino-acid chain: ATP synthase subunit beta (467 aa).

153-160 is a binding site for ATP; it reads GGAGVGKT.

The protein belongs to the ATPase alpha/beta chains family. In terms of assembly, F-type ATPases have 2 components, CF(1) - the catalytic core - and CF(0) - the membrane proton channel. CF(1) has five subunits: alpha(3), beta(3), gamma(1), delta(1), epsilon(1). CF(0) has three main subunits: a(1), b(2) and c(9-12). The alpha and beta chains form an alternating ring which encloses part of the gamma chain. CF(1) is attached to CF(0) by a central stalk formed by the gamma and epsilon chains, while a peripheral stalk is formed by the delta and b chains.

The protein localises to the cell membrane. It catalyses the reaction ATP + H2O + 4 H(+)(in) = ADP + phosphate + 5 H(+)(out). Functionally, produces ATP from ADP in the presence of a proton gradient across the membrane. The catalytic sites are hosted primarily by the beta subunits. The sequence is that of ATP synthase subunit beta from Lactiplantibacillus plantarum (strain ATCC BAA-793 / NCIMB 8826 / WCFS1) (Lactobacillus plantarum).